A 130-amino-acid polypeptide reads, in one-letter code: Mitochondrial pyruvate carrier 1 (130 aa).

2 helical membrane passes run 23 to 45 and 55 to 77; these read LKYI…IAAI and ISGP…ALSV.

This sequence belongs to the mitochondrial pyruvate carrier (MPC) (TC 2.A.105) family. In terms of assembly, the functional 150 kDa pyruvate import complex is a heteromer of MPC1 and either MPC2 or MPC3.

It is found in the mitochondrion. It localises to the mitochondrion inner membrane. In terms of biological role, mediates the uptake of pyruvate into mitochondria. The protein is Mitochondrial pyruvate carrier 1 of Saccharomyces cerevisiae (strain ATCC 204508 / S288c) (Baker's yeast).